The following is a 270-amino-acid chain: BPI fold-containing family A member 1 (270 aa).

The first 19 residues, 1–19 (MFLVGSLVVLCGLLAQSTA), serve as a signal peptide directing secretion. Residues 104–109 (LVGGLL) are important for surfactant activity and antibacterial properties. Asn-174 carries N-linked (GlcNAc...) asparagine glycosylation. A disulfide bridge connects residues Cys-196 and Cys-238.

It belongs to the BPI/LBP/Plunc superfamily. Plunc family. As to quaternary structure, monomer. Interacts (via N-terminus) with SCNN1B, a subunit of the heterotrimeric epithelial sodium channel (ENaC); this inhibits proteolytic activation of ENaC. Detected in adult nasal epithelium, heart, lung, spleen, testis and salivary gland, and in embryonic nasal epithelium, lung, salivary gland and thymus.

Its subcellular location is the secreted. Its function is as follows. Lipid-binding protein which shows high specificity for the surfactant phospholipid dipalmitoylphosphatidylcholine (DPPC). Plays a role in the innate immune responses of the upper airways. Reduces the surface tension in secretions from airway epithelia and inhibits the formation of biofilm by pathogenic Gram-negative bacteria, such as P.aeruginosa and K.pneumoniae. Negatively regulates proteolytic cleavage of SCNN1G, an event that is required for activation of the epithelial sodium channel (ENaC), and thereby contributes to airway surface liquid homeostasis and proper clearance of mucus. Plays a role in the airway inflammatory response after exposure to irritants. May attract macrophages and neutrophils. The chain is BPI fold-containing family A member 1 (Bpifa1) from Rattus norvegicus (Rat).